The following is a 352-amino-acid chain: CRISPR-associated endonuclease Cas1 1 (352 aa).

3 residues coordinate Mn(2+): E207, H274, and E289.

It belongs to the CRISPR-associated endonuclease Cas1 family. As to quaternary structure, homodimer, forms a heterotetramer with a Cas2 homodimer. Mg(2+) serves as cofactor. Requires Mn(2+) as cofactor.

Functionally, CRISPR (clustered regularly interspaced short palindromic repeat), is an adaptive immune system that provides protection against mobile genetic elements (viruses, transposable elements and conjugative plasmids). CRISPR clusters contain spacers, sequences complementary to antecedent mobile elements, and target invading nucleic acids. CRISPR clusters are transcribed and processed into CRISPR RNA (crRNA). Acts as a dsDNA endonuclease. Involved in the integration of spacer DNA into the CRISPR cassette. The polypeptide is CRISPR-associated endonuclease Cas1 1 (Saccharolobus solfataricus (strain ATCC 35092 / DSM 1617 / JCM 11322 / P2) (Sulfolobus solfataricus)).